Reading from the N-terminus, the 115-residue chain is Succinate dehydrogenase assembly factor 3, mitochondrial (115 aa).

It belongs to the complex I LYR family. SDHAF3 subfamily. As to quaternary structure, interacts with the iron-sulfur protein subunit within the SDH catalytic dimer.

It is found in the mitochondrion matrix. Plays an essential role in the assembly of succinate dehydrogenase (SDH), an enzyme complex (also referred to as respiratory complex II) that is a component of both the tricarboxylic acid (TCA) cycle and the mitochondrial electron transport chain, and which couples the oxidation of succinate to fumarate with the reduction of ubiquinone (coenzyme Q) to ubiquinol. Promotes maturation of the iron-sulfur protein subunit of the SDH catalytic dimer, protecting it from the deleterious effects of oxidants. May act together with SDHAF1. The chain is Succinate dehydrogenase assembly factor 3, mitochondrial (acn9) from Nematostella vectensis (Starlet sea anemone).